The primary structure comprises 596 residues: Elongation factor 4 (596 aa).

The tr-type G domain maps to Lys-2–Asn-183. Residues Asp-14–Thr-19 and Asn-130–Asp-133 contribute to the GTP site.

The protein belongs to the TRAFAC class translation factor GTPase superfamily. Classic translation factor GTPase family. LepA subfamily.

Its subcellular location is the cell inner membrane. The enzyme catalyses GTP + H2O = GDP + phosphate + H(+). In terms of biological role, required for accurate and efficient protein synthesis under certain stress conditions. May act as a fidelity factor of the translation reaction, by catalyzing a one-codon backward translocation of tRNAs on improperly translocated ribosomes. Back-translocation proceeds from a post-translocation (POST) complex to a pre-translocation (PRE) complex, thus giving elongation factor G a second chance to translocate the tRNAs correctly. Binds to ribosomes in a GTP-dependent manner. The polypeptide is Elongation factor 4 (Campylobacter concisus (strain 13826)).